A 154-amino-acid chain; its full sequence is Fibroblast growth factor 2 (154 aa).

Residues 1–9 constitute a propeptide that is removed on maturation; the sequence is MAASGITSL. Residue Asn-35 participates in heparin binding. Tyr-81 bears the Phosphotyrosine; by TEC mark. Residue Lys-94 forms a Glycyl lysine isopeptide (Lys-Gly) (interchain with G-Cter in SUMO1) linkage. The interval 127 to 143 is heparin-binding; that stretch reads KRTGQYKLGSKTGPGQK.

Belongs to the heparin-binding growth factors family. As to quaternary structure, monomer. Homodimer. Interacts with FGFR1, FGFR2, FGFR3 and FGFR4. Affinity between fibroblast growth factors (FGFs) and their receptors is increased by heparan sulfate glycosaminoglycans that function as coreceptors. Interacts with CSPG4, FGFBP1 and TEC. Found in a complex with FGFBP1, FGF1 and FGF2. Interacts with FGFBP3. Interacts with integrin ITGAV:ITGB3; the interaction is required for FGF2 signaling. Interacts with SNORC (via the extracellular domain). Interacts with glypican GPC3. In terms of processing, phosphorylation at Tyr-81 regulates FGF2 unconventional secretion.

The protein localises to the secreted. It localises to the nucleus. Acts as a ligand for FGFR1, FGFR2, FGFR3 and FGFR4. Also acts as an integrin ligand which is required for FGF2 signaling. Binds to integrin ITGAV:ITGB3. Plays an important role in the regulation of cell survival, cell division, cell differentiation and cell migration. Functions as a potent mitogen in vitro. Can induce angiogenesis. Mediates phosphorylation of ERK1/2 and thereby promotes retinal lens fiber differentiation. The protein is Fibroblast growth factor 2 (Fgf2) of Mus musculus (Mouse).